The sequence spans 72 residues: Large ribosomal subunit protein uL29 (72 aa).

This sequence belongs to the universal ribosomal protein uL29 family.

In Treponema pallidum (strain Nichols), this protein is Large ribosomal subunit protein uL29 (rpmC).